Reading from the N-terminus, the 304-residue chain is ADP-ribosyl cyclase/cyclic ADP-ribose hydrolase 1 (304 aa).

Over 1–21 (MANYEFSQVSGDRPGCRLSRK) the chain is Cytoplasmic. Residues 22–44 (AQIGLGVGLLVLIALVVGIVVIL) traverse the membrane as a helical; Signal-anchor for type II membrane protein segment. Topologically, residues 45–304 (LRPRSLLVWT…PEHPSCRLNT (260 aa)) are extracellular. Cystine bridges form between Cys70–Cys86, Cys103–Cys184, and Cys164–Cys177. Residue Asn104 is glycosylated (N-linked (GlcNAc...) asparagine). Residue Cys123 is part of the active site. An N-linked (GlcNAc...) asparagine glycan is attached at Asn124. Cys205 is a catalytic residue. 2 N-linked (GlcNAc...) asparagine glycosylation sites follow: Asn213 and Asn223. 2 disulfides stabilise this stretch: Cys258–Cys279 and Cys291–Cys300.

It belongs to the ADP-ribosyl cyclase family. As to quaternary structure, homodimer.

It localises to the membrane. It catalyses the reaction NAD(+) = cyclic ADP-beta-D-ribose + nicotinamide + H(+). The catalysed reaction is nicotinate + NADP(+) = nicotinate-adenine dinucleotide phosphate + nicotinamide. It carries out the reaction NAD(+) + H2O = ADP-D-ribose + nicotinamide + H(+). Functionally, synthesizes the second messengers cyclic ADP-ribose (cADPR) and nicotinate-adenine dinucleotide phosphate (NAADP), the former a second messenger for glucose-induced insulin secretion, the latter a Ca(2+) mobilizer. Also has cADPR hydrolase activity. The protein is ADP-ribosyl cyclase/cyclic ADP-ribose hydrolase 1 (Cd38) of Mus musculus (Mouse).